Here is a 133-residue protein sequence, read N- to C-terminus: Large-conductance mechanosensitive channel (133 aa).

3 helical membrane passes run 8–28 (FAMKGNVVDLAVGVIIGGAFG), 30–50 (IVTSLVNDVIMPILGLILGGI), and 73–93 (GQFIQNILDFLIISFSIFLFI).

It belongs to the MscL family. In terms of assembly, homopentamer.

The protein localises to the cell membrane. Functionally, channel that opens in response to stretch forces in the membrane lipid bilayer. May participate in the regulation of osmotic pressure changes within the cell. In Hathewaya histolytica (Clostridium histolyticum), this protein is Large-conductance mechanosensitive channel.